A 354-amino-acid chain; its full sequence is Clavesin-1 (354 aa).

One can recognise a CRAL-TRIO domain in the interval 118-279 (IKRALIDGFP…EFGGTLPPYD (162 aa)). The segment at 317–354 (RECSPKPMKRSQSVVEAGTLKHEEKGENENTQPLLALD) is disordered. Residues 335–344 (TLKHEEKGEN) are compositionally biased toward basic and acidic residues. Residues 345–354 (ENTQPLLALD) show a composition bias toward polar residues.

Forms a complex with clathrin heavy chain and gamma-adaptin.

Its subcellular location is the golgi apparatus. The protein resides in the trans-Golgi network membrane. It localises to the early endosome membrane. The protein localises to the cytoplasmic vesicle. It is found in the clathrin-coated vesicle. Functionally, required for normal morphology of late endosomes and/or lysosomes in neurons. Binds phosphatidylinositol 3,5-bisphosphate (PtdIns(3,5)P2). This Mus musculus (Mouse) protein is Clavesin-1 (Clvs1).